An 81-amino-acid chain; its full sequence is Photosystem I iron-sulfur center (81 aa).

4Fe-4S ferredoxin-type domains follow at residues 2–31 (SHSV…MIPW) and 39–68 (IAPA…VRVY). [4Fe-4S] cluster is bound by residues Cys11, Cys14, Cys17, Cys21, Cys48, Cys51, Cys54, and Cys58.

In terms of assembly, the eukaryotic PSI reaction center is composed of at least 11 subunits. Requires [4Fe-4S] cluster as cofactor.

It is found in the plastid. It localises to the chloroplast thylakoid membrane. It carries out the reaction reduced [plastocyanin] + hnu + oxidized [2Fe-2S]-[ferredoxin] = oxidized [plastocyanin] + reduced [2Fe-2S]-[ferredoxin]. Its function is as follows. Apoprotein for the two 4Fe-4S centers FA and FB of photosystem I (PSI); essential for photochemical activity. FB is the terminal electron acceptor of PSI, donating electrons to ferredoxin. The C-terminus interacts with PsaA/B/D and helps assemble the protein into the PSI complex. Required for binding of PsaD and PsaE to PSI. PSI is a plastocyanin-ferredoxin oxidoreductase, converting photonic excitation into a charge separation, which transfers an electron from the donor P700 chlorophyll pair to the spectroscopically characterized acceptors A0, A1, FX, FA and FB in turn. This chain is Photosystem I iron-sulfur center, found in Chloranthus spicatus (Chulantree).